The chain runs to 258 residues: Type III pantothenate kinase (258 aa).

6-13 (DVGNTNTV) contacts ATP. Substrate contacts are provided by residues tyrosine 100 and 107-110 (GADR). Catalysis depends on aspartate 109, which acts as the Proton acceptor. Aspartate 129 serves as a coordination point for K(+). Position 132 (threonine 132) interacts with ATP. Threonine 184 is a substrate binding site.

Belongs to the type III pantothenate kinase family. As to quaternary structure, homodimer. It depends on NH4(+) as a cofactor. Requires K(+) as cofactor.

It is found in the cytoplasm. It catalyses the reaction (R)-pantothenate + ATP = (R)-4'-phosphopantothenate + ADP + H(+). The protein operates within cofactor biosynthesis; coenzyme A biosynthesis; CoA from (R)-pantothenate: step 1/5. In terms of biological role, catalyzes the phosphorylation of pantothenate (Pan), the first step in CoA biosynthesis. The sequence is that of Type III pantothenate kinase from Geobacillus kaustophilus (strain HTA426).